A 239-amino-acid chain; its full sequence is Geranylgeranylglyceryl phosphate synthase (239 aa).

Mg(2+)-binding residues include aspartate 18 and serine 45. Sn-glycerol 1-phosphate is bound by residues 166–172 (YLEAGSG), 197–198 (GG), and 219–220 (GT).

Belongs to the GGGP/HepGP synthase family. Group II subfamily. The cofactor is Mg(2+).

It localises to the cytoplasm. It catalyses the reaction sn-glycerol 1-phosphate + (2E,6E,10E)-geranylgeranyl diphosphate = sn-3-O-(geranylgeranyl)glycerol 1-phosphate + diphosphate. It participates in membrane lipid metabolism; glycerophospholipid metabolism. Prenyltransferase that catalyzes the transfer of the geranylgeranyl moiety of geranylgeranyl diphosphate (GGPP) to the C3 hydroxyl of sn-glycerol-1-phosphate (G1P). This reaction is the first ether-bond-formation step in the biosynthesis of archaeal membrane lipids. The polypeptide is Geranylgeranylglyceryl phosphate synthase (Pyrobaculum aerophilum (strain ATCC 51768 / DSM 7523 / JCM 9630 / CIP 104966 / NBRC 100827 / IM2)).